Consider the following 531-residue polypeptide: O-phosphoserine--tRNA(Cys) ligase (531 aa).

Residues 189–191, 234–236, 276–277, and Asn319 contribute to the substrate site; these read HMT, SAS, and YY.

Belongs to the class-II aminoacyl-tRNA synthetase family. O-phosphoseryl-tRNA(Cys) synthetase subfamily. As to quaternary structure, homotetramer. Interacts with SepCysS.

The catalysed reaction is tRNA(Cys) + O-phospho-L-serine + ATP = O-phospho-L-seryl-tRNA(Cys) + AMP + diphosphate. In terms of biological role, catalyzes the attachment of O-phosphoserine (Sep) to tRNA(Cys). In Methanospirillum hungatei JF-1 (strain ATCC 27890 / DSM 864 / NBRC 100397 / JF-1), this protein is O-phosphoserine--tRNA(Cys) ligase.